A 91-amino-acid polypeptide reads, in one-letter code: Small ribosomal subunit protein uS15 (91 aa).

It belongs to the universal ribosomal protein uS15 family. In terms of assembly, part of the 30S ribosomal subunit. Forms a bridge to the 50S subunit in the 70S ribosome, contacting the 23S rRNA.

Its function is as follows. One of the primary rRNA binding proteins, it binds directly to 16S rRNA where it helps nucleate assembly of the platform of the 30S subunit by binding and bridging several RNA helices of the 16S rRNA. Functionally, forms an intersubunit bridge (bridge B4) with the 23S rRNA of the 50S subunit in the ribosome. This Rickettsia typhi (strain ATCC VR-144 / Wilmington) protein is Small ribosomal subunit protein uS15.